The sequence spans 406 residues: Riboflavin biosynthesis protein RibBA (406 aa).

The DHBP synthase stretch occupies residues 1 to 209 (MSEREEFKFN…IADLIKYRLR (209 aa)). D-ribulose 5-phosphate contacts are provided by residues 33–34 (RE), Asp-38, 148–152 (RAGHT), and Glu-172. Position 34 (Glu-34) interacts with Mg(2+). Residue His-151 participates in Mg(2+) binding. A GTP cyclohydrolase II region spans residues 210–406 (RETLVEKVAS…VKKDKLGHMF (197 aa)). 260–264 (RVHSE) is a binding site for GTP. Residues Cys-265, Cys-276, and Cys-278 each coordinate Zn(2+). GTP-binding positions include Gln-281, 304–306 (EGR), and Thr-326. The Proton acceptor; for GTP cyclohydrolase activity role is filled by Asp-338. Arg-340 (nucleophile; for GTP cyclohydrolase activity) is an active-site residue. Residues Thr-361 and Lys-366 each coordinate GTP.

In the N-terminal section; belongs to the DHBP synthase family. The protein in the C-terminal section; belongs to the GTP cyclohydrolase II family. Mg(2+) serves as cofactor. Mn(2+) is required as a cofactor. Requires Zn(2+) as cofactor.

It catalyses the reaction D-ribulose 5-phosphate = (2S)-2-hydroxy-3-oxobutyl phosphate + formate + H(+). The enzyme catalyses GTP + 4 H2O = 2,5-diamino-6-hydroxy-4-(5-phosphoribosylamino)-pyrimidine + formate + 2 phosphate + 3 H(+). Its pathway is cofactor biosynthesis; riboflavin biosynthesis; 2-hydroxy-3-oxobutyl phosphate from D-ribulose 5-phosphate: step 1/1. It participates in cofactor biosynthesis; riboflavin biosynthesis; 5-amino-6-(D-ribitylamino)uracil from GTP: step 1/4. Catalyzes the conversion of D-ribulose 5-phosphate to formate and 3,4-dihydroxy-2-butanone 4-phosphate. Functionally, catalyzes the conversion of GTP to 2,5-diamino-6-ribosylamino-4(3H)-pyrimidinone 5'-phosphate (DARP), formate and pyrophosphate. The sequence is that of Riboflavin biosynthesis protein RibBA from Aquifex aeolicus (strain VF5).